An 801-amino-acid polypeptide reads, in one-letter code: Bromodomain-containing protein 2 (801 aa).

Position 1 is an N-acetylmethionine (methionine 1). The residue at position 6 (threonine 6) is a Phosphothreonine. The residue at position 37 (serine 37) is a Phosphoserine. A disordered region spans residues alanine 53–glycine 73. One can recognise a Bromo 1 domain in the interval arginine 74–methionine 180. A protein is bound by residues aspartate 112, tyrosine 155, asparagine 156, lysine 157, aspartate 160, and aspartate 161. Disordered regions lie at residues proline 268–glutamine 349, glutamate 456–lysine 647, and glutamate 737–glycine 801. The span at threonine 285 to serine 298 shows a compositional bias: low complexity. 3 positions are modified to phosphoserine: serine 298, serine 301, and serine 305. A compositionally biased stretch (basic and acidic residues) spans methionine 316–proline 332. The Bromo 2 domain maps to glycine 344–methionine 453. Over residues serine 481 to glutamate 514 the composition is skewed to acidic residues. Basic residues predominate over residues lysine 544 to arginine 566. Residues lysine 555–lysine 559 carry the Nuclear localization signal motif. A compositionally biased stretch (gly residues) spans glycine 592 to glycine 612. One can recognise an NET domain in the interval aspartate 632–proline 714. A Phosphoserine modification is found at serine 633. Over residues serine 763–threonine 795 the composition is skewed to low complexity.

It belongs to the BET family. In terms of assembly, homodimer. Interacts with E2F1. Interacts with (acetylated) STAT3; promoting STAT3 recruitment to chromatin. Interacts with CTCF; promoting BRD2 recruitment to chromatin. As to quaternary structure, (Microbial infection) Interacts with herpes virus 8 protein LANA1.

It localises to the nucleus. The protein resides in the chromosome. Inhibited by JQ1, a thieno-triazolo-1,4-diazepine derivative, which specifically inhibits members of the BET family (BRD2, BRD3 and BRD4). The first bromo domain is inhibited by GSK778 (iBET-BD1), which specifically inhibits the first bromo domain of members of the BET family (BRD2, BRD3 and BRD4). The second bromo domain is inhibited by ABBV-744, which specifically inhibits the second bromo domain of members of the BET family (BRD2, BRD3 and BRD4). The second bromo domain is inhibited by GSK046 (iBET-BD2), which specifically inhibits the second bromo domain of members of the BET family (BRD2, BRD3 and BRD4). In terms of biological role, chromatin reader protein that specifically recognizes and binds histone H4 acetylated at 'Lys-5' and 'Lys-12' (H4K5ac and H4K12ac, respectively), thereby controlling gene expression and remodeling chromatin structures. Recruits transcription factors and coactivators to target gene sites, and activates RNA polymerase II machinery for transcriptional elongation. Plays a key role in genome compartmentalization via its association with CTCF and cohesin: recruited to chromatin by CTCF and promotes formation of topologically associating domains (TADs) via its ability to bind acetylated histones, contributing to CTCF boundary formation and enhancer insulation. Also recognizes and binds acetylated non-histone proteins, such as STAT3. Involved in inflammatory response by regulating differentiation of naive CD4(+) T-cells into T-helper Th17: recognizes and binds STAT3 acetylated at 'Lys-87', promoting STAT3 recruitment to chromatin. In addition to acetylated lysines, also recognizes and binds lysine residues on histones that are both methylated and acetylated on the same side chain to form N6-acetyl-N6-methyllysine (Kacme), an epigenetic mark of active chromatin associated with increased transcriptional initiation. Specifically binds histone H4 acetyl-methylated at 'Lys-5' and 'Lys-12' (H4K5acme and H4K12acme, respectively). The polypeptide is Bromodomain-containing protein 2 (Homo sapiens (Human)).